The following is a 601-amino-acid chain: Alpha-terpineol synthase, chloroplastic (601 aa).

A chloroplast-targeting transit peptide spans 1 to 47 (MSTISIHHVGILRNPLHSKSKRASINKPWSLSLPRSSSASRLVEPCR). Mn(2+) is bound by residues Asp357 and Asp361. A DDXXD motif motif is present at residues 357–361 (DDVYD). Homodimerization stretches follow at residues 363–369 (YGTLDEL) and 435–471 (EAEW…ELSL). Residues Asp499 and Glu507 each contribute to the Mn(2+) site.

The protein belongs to the terpene synthase family. Homodimer. It depends on Mn(2+) as a cofactor. Mg(2+) serves as cofactor.

It is found in the plastid. The protein localises to the chloroplast. The catalysed reaction is (2E)-geranyl diphosphate + H2O = (S)-alpha-terpineol + diphosphate. It carries out the reaction (2E)-geranyl diphosphate + H2O = (R)-alpha-terpineol + diphosphate. The protein operates within secondary metabolite biosynthesis; terpenoid biosynthesis. Functionally, involved in the biosynthesis of phenolic monoterpenes natural products. Monoterpene synthase which catalyzes the conversion of geranyl diphosphate (GPP) to alpha-terpineol (isomer is not determined). The protein is Alpha-terpineol synthase, chloroplastic of Thymus caespititius (Cretan thyme).